A 60-amino-acid polypeptide reads, in one-letter code: Andropin (60 aa).

The first 23 residues, 1–23 (MKYFVVLVVLALILAIAVGPSDA), serve as a signal peptide directing secretion.

It belongs to the andropin family. As to expression, ejaculatory duct of adult males.

The protein localises to the secreted. Male-specific peptide with moderate activity against Gram-positive bacteria. This chain is Andropin (Anp), found in Drosophila simulans (Fruit fly).